A 434-amino-acid polypeptide reads, in one-letter code: Alpha-enolase (434 aa).

S40 lines the Mg(2+) pocket. H158 and E167 together coordinate substrate. Residue E210 is the Proton donor of the active site. The Mg(2+) site is built by D245, E293, and D318. Substrate is bound by residues E293, D318, 370–373 (SHRS), and K394.

Belongs to the enolase family. In terms of assembly, homodimer. It depends on Mg(2+) as a cofactor.

It localises to the cytoplasm. It carries out the reaction (2R)-2-phosphoglycerate = phosphoenolpyruvate + H2O. Its pathway is carbohydrate degradation; glycolysis; pyruvate from D-glyceraldehyde 3-phosphate: step 4/5. In Trachemys scripta elegans (Red-eared slider turtle), this protein is Alpha-enolase.